We begin with the raw amino-acid sequence, 306 residues long: Leucine-rich repeat-containing protein 59 (306 aa).

An N-acetylmethionine modification is found at Met-1. At Thr-2 the chain carries N-acetylthreonine; in Leucine-rich repeat-containing protein 59, N-terminally processed. The Cytoplasmic portion of the chain corresponds to 2–244; the sequence is TKAGSKGGNL…KPPPRKHTRS (243 aa). LRR repeat units lie at residues 10-31, 40-62, 63-84, 86-107, and 109-128; these read NLRD…NEVP, KATV…CGLT, HLVK…FGRL, NLQH…FAQL, and SLKW…AKVA. A phosphoserine mark is found at Ser-23 and Ser-25. N6-succinyllysine is present on Lys-73. Lys-135 is modified (N6-acetyllysine). A coiled-coil region spans residues 152 to 216; that stretch reads QADQERERQR…KAAKREQEKK (65 aa). Residues 175-221 are compositionally biased toward basic and acidic residues; it reads AKQRAKEAQERELRKREKAEEKERRRKEYDALKAAKREQEKKPKKET. The segment at 175–241 is disordered; sequence AKQRAKEAQE…RPRKPPPRKH (67 aa). Over residues 229 to 241 the composition is skewed to basic residues; sequence SSSRPRKPPPRKH. A helical transmembrane segment spans residues 245–265; it reads WAVLKLLLLLLLCVAGGLVAC. Residues 266–306 are Lumenal-facing; the sequence is RVTELQQQPLCTSVNTIYDNAVRGLRSHDILQWVLQTDSQQ.

As to quaternary structure, can form homodimers. Interacts with SGO1. Interacts with FGF1.

It is found in the microsome membrane. It localises to the endoplasmic reticulum membrane. The protein resides in the nucleus envelope. Functionally, required for nuclear import of FGF1, but not that of FGF2. Might regulate nuclear import of exogenous FGF1 by facilitating interaction with the nuclear import machinery and by transporting cytosolic FGF1 to, and possibly through, the nuclear pores. The sequence is that of Leucine-rich repeat-containing protein 59 (LRRC59) from Bos taurus (Bovine).